Consider the following 136-residue polypeptide: NADH-ubiquinone oxidoreductase chain 3 (136 aa).

Transmembrane regions (helical) follow at residues 5–25 (TFFL…NLIF), 55–75 (ISFF…LLVY), and 85–105 (GIYG…GFAF).

This sequence belongs to the complex I subunit 3 family.

The protein localises to the mitochondrion membrane. The enzyme catalyses a ubiquinone + NADH + 5 H(+)(in) = a ubiquinol + NAD(+) + 4 H(+)(out). Its function is as follows. Core subunit of the mitochondrial membrane respiratory chain NADH dehydrogenase (Complex I) that is believed to belong to the minimal assembly required for catalysis. Complex I functions in the transfer of electrons from NADH to the respiratory chain. The immediate electron acceptor for the enzyme is believed to be ubiquinone. The protein is NADH-ubiquinone oxidoreductase chain 3 (nd3) of Emericella nidulans (Aspergillus nidulans).